The chain runs to 369 residues: Saccharopine dehydrogenase [NAD(+), L-lysine-forming] (369 aa).

2 residues coordinate L-saccharopine: arginine 19 and lysine 78. Lysine 78 (proton acceptor) is an active-site residue. Catalysis depends on histidine 96, which acts as the Proton donor. Residue glutamine 101 participates in L-saccharopine binding. An NAD(+)-binding site is contributed by arginine 130. 2 residues coordinate L-saccharopine: arginine 131 and phenylalanine 135. NAD(+)-binding positions include 203–204 (GR), aspartate 227, threonine 231, tyrosine 251, and valine 278. Cysteine 205 and cysteine 249 are oxidised to a cystine. 279 to 281 (SAD) is an L-saccharopine binding site. An NAD(+)-binding site is contributed by 318–321 (IDHL).

This sequence belongs to the AlaDH/PNT family. Monomer.

It catalyses the reaction L-saccharopine + NAD(+) + H2O = L-lysine + 2-oxoglutarate + NADH + H(+). The protein operates within amino-acid biosynthesis; L-lysine biosynthesis via AAA pathway; L-lysine from L-alpha-aminoadipate (fungal route): step 3/3. Functionally, catalyzes the NAD(+)-dependent cleavage of saccharopine to L-lysine and 2-oxoglutarate, the final step in the alpha-aminoadipate (AAA) pathway for lysin biosynthesis. This Yarrowia lipolytica (strain CLIB 122 / E 150) (Yeast) protein is Saccharopine dehydrogenase [NAD(+), L-lysine-forming].